A 436-amino-acid chain; its full sequence is Trigger factor (436 aa).

Residues 163-248 enclose the PPIase FKBP-type domain; the sequence is GDTVVIDFDG…IHEVKEKQLP (86 aa).

The protein belongs to the FKBP-type PPIase family. Tig subfamily.

It localises to the cytoplasm. The catalysed reaction is [protein]-peptidylproline (omega=180) = [protein]-peptidylproline (omega=0). Functionally, involved in protein export. Acts as a chaperone by maintaining the newly synthesized protein in an open conformation. Functions as a peptidyl-prolyl cis-trans isomerase. The protein is Trigger factor of Levilactobacillus brevis (strain ATCC 367 / BCRC 12310 / CIP 105137 / JCM 1170 / LMG 11437 / NCIMB 947 / NCTC 947) (Lactobacillus brevis).